The chain runs to 948 residues: Zinc finger CCCH domain-containing protein 18 (948 aa).

At M1 the chain carries N-acetylmethionine. A disordered region spans residues 1 to 219 (MDVAESPELD…SDRKVRPRPT (219 aa)). S6 is subject to Phosphoserine. Residues 15–25 (EDEEQPALSDD) show a composition bias toward acidic residues. 8 positions are modified to phosphoserine: S33, S45, S58, S64, S71, S75, S80, and S92. The segment covering 70 to 86 (ASEPKSQDQDSEAHELS) has biased composition (basic and acidic residues). The span at 95 to 105 (EEGDDVEEDGT) shows a compositional bias: acidic residues. The residue at position 105 (T105) is a Phosphothreonine. Phosphoserine occurs at positions 106 and 114. Over residues 106–120 (SDLRDEASSVTRELD) the composition is skewed to basic and acidic residues. 2 stretches are compositionally biased toward acidic residues: residues 121–132 (EHELDYDEEVPE) and 139–154 (QEEEAEKAGAEEEEEK). S169 carries the phosphoserine modification. Residues 177–186 (EAAKEKKKED) are compositionally biased toward basic and acidic residues. Over residues 187–203 (DDGEIDDGEIDDDDLEE) the composition is skewed to acidic residues. Residues 204 to 213 (GEVKDPSDRK) show a composition bias toward basic and acidic residues. A C3H1-type zinc finger spans residues 215–241 (RPRPTCRFFMKGNCTWGMSCRFIHPGV). The residue at position 245 (G245) is an Omega-N-methylarginine. Disordered regions lie at residues 272–296 (ANPWGGPVVDEILPPPPPEPPTESA) and 388–922 (YTEA…TLSR). A compositionally biased stretch (basic and acidic residues) spans 392–480 (EPYHNYRERE…DREKDKEKPK (89 aa)). Positions 395–460 (HNYRERERER…RERAKRDEKD (66 aa)) form a coiled coil. S483 is subject to Phosphoserine. Residue K506 forms a Glycyl lysine isopeptide (Lys-Gly) (interchain with G-Cter in SUMO2) linkage. Residues 506-516 (KRADEWKDPWR) are compositionally biased toward basic and acidic residues. A phosphoserine mark is found at S528, S530, and S532. Residues 541 to 602 (SASSASASNS…SRSRSFSSSP (62 aa)) are compositionally biased toward low complexity. A compositionally biased stretch (pro residues) spans 603 to 612 (SPSPTPSPHR). Residues K618 and K657 each participate in a glycyl lysine isopeptide (Lys-Gly) (interchain with G-Cter in SUMO2) cross-link. The segment covering 657–666 (KPGDLREARR) has biased composition (basic and acidic residues). Composition is skewed to low complexity over residues 688 to 721 (GSSYSGSSSRSRSLSVSSVSSVSSATSSSSSVHS) and 732 to 746 (ASPVSSASSRSPTPA). The span at 756–770 (KKEDGVREEKRRRDP) shows a compositional bias: basic and acidic residues. Over residues 774-804 (PPKSSKAPAGGKASQQAAAPQPAVPGQPQQG) the composition is skewed to low complexity. K810 carries the post-translational modification N6-acetyllysine. A Glycyl lysine isopeptide (Lys-Gly) (interchain with G-Cter in SUMO2) cross-link involves residue K813. Residues 820 to 837 (AADKGSRKRYEPSDKDRQ) show a composition bias toward basic and acidic residues. Phosphoserine is present on residues S838, S847, S863, S888, and S891. Residues 888–898 (SPQSKGSSKVT) are compositionally biased toward polar residues. A compositionally biased stretch (low complexity) spans 902 to 919 (GKATDTATAGTKSGKAST). K903 participates in a covalent cross-link: Glycyl lysine isopeptide (Lys-Gly) (interchain with G-Cter in SUMO2). Positions 916–945 (KASTLSRREELLKQLKAVEDAIARKRAKIP) form a coiled coil.

As to quaternary structure, interacts with ZFC3H1 in a RNase-insensitive manner.

Its subcellular location is the nucleus. This is Zinc finger CCCH domain-containing protein 18 (Zc3h18) from Mus musculus (Mouse).